The sequence spans 31 residues: Cytochrome b6-f complex subunit 6 (31 aa).

A helical transmembrane segment spans residues 4 to 24; sequence IISYFLFLIGALTLALVLFIG.

The protein belongs to the PetL family. In terms of assembly, the 4 large subunits of the cytochrome b6-f complex are cytochrome b6, subunit IV (17 kDa polypeptide, PetD), cytochrome f and the Rieske protein, while the 4 small subunits are PetG, PetL, PetM and PetN. The complex functions as a dimer.

It localises to the plastid. The protein resides in the chloroplast thylakoid membrane. Its function is as follows. Component of the cytochrome b6-f complex, which mediates electron transfer between photosystem II (PSII) and photosystem I (PSI), cyclic electron flow around PSI, and state transitions. PetL is important for photoautotrophic growth as well as for electron transfer efficiency and stability of the cytochrome b6-f complex. The sequence is that of Cytochrome b6-f complex subunit 6 from Marchantia polymorpha (Common liverwort).